The chain runs to 104 residues: Disrupted in renal carcinoma protein 1 (104 aa).

Residues 1-23 are disordered; sequence MPEAHMQPAKLQTSLPTTDHGSK. Residues 10 to 19 are compositionally biased toward polar residues; the sequence is KLQTSLPTTD.

Expressed at low steady-state level in adult placenta, testis, ovary, prostate, fetal kidney, spleen and skeletal muscle.

This Homo sapiens (Human) protein is Disrupted in renal carcinoma protein 1 (DIRC1).